Reading from the N-terminus, the 65-residue chain is MAFDTKLLEIIACPVCKGKLRFDKENSELISTAAKLAYPVIDDIPVLLENEARELSLDEVQKWNS.

It belongs to the UPF0434 family.

The sequence is that of UPF0434 protein PSHAa1659 from Pseudoalteromonas translucida (strain TAC 125).